The sequence spans 476 residues: Glycogen synthase (476 aa).

K15 is a binding site for ADP-alpha-D-glucose.

The protein belongs to the glycosyltransferase 1 family. Bacterial/plant glycogen synthase subfamily.

The enzyme catalyses [(1-&gt;4)-alpha-D-glucosyl](n) + ADP-alpha-D-glucose = [(1-&gt;4)-alpha-D-glucosyl](n+1) + ADP + H(+). Its pathway is glycan biosynthesis; glycogen biosynthesis. Functionally, synthesizes alpha-1,4-glucan chains using ADP-glucose. This Chlamydia pneumoniae (Chlamydophila pneumoniae) protein is Glycogen synthase.